The chain runs to 572 residues: Dihydroxy-acid dehydratase (572 aa).

D78 provides a ligand contact to Mg(2+). Position 119 (C119) interacts with [2Fe-2S] cluster. Mg(2+) is bound by residues D120 and K121. Position 121 is an N6-carboxylysine (K121). Residue C192 participates in [2Fe-2S] cluster binding. E459 provides a ligand contact to Mg(2+). S485 serves as the catalytic Proton acceptor.

This sequence belongs to the IlvD/Edd family. In terms of assembly, homodimer. Requires [2Fe-2S] cluster as cofactor. It depends on Mg(2+) as a cofactor.

The catalysed reaction is (2R)-2,3-dihydroxy-3-methylbutanoate = 3-methyl-2-oxobutanoate + H2O. It carries out the reaction (2R,3R)-2,3-dihydroxy-3-methylpentanoate = (S)-3-methyl-2-oxopentanoate + H2O. The protein operates within amino-acid biosynthesis; L-isoleucine biosynthesis; L-isoleucine from 2-oxobutanoate: step 3/4. Its pathway is amino-acid biosynthesis; L-valine biosynthesis; L-valine from pyruvate: step 3/4. Its function is as follows. Functions in the biosynthesis of branched-chain amino acids. Catalyzes the dehydration of (2R,3R)-2,3-dihydroxy-3-methylpentanoate (2,3-dihydroxy-3-methylvalerate) into 2-oxo-3-methylpentanoate (2-oxo-3-methylvalerate) and of (2R)-2,3-dihydroxy-3-methylbutanoate (2,3-dihydroxyisovalerate) into 2-oxo-3-methylbutanoate (2-oxoisovalerate), the penultimate precursor to L-isoleucine and L-valine, respectively. The polypeptide is Dihydroxy-acid dehydratase (Helicobacter hepaticus (strain ATCC 51449 / 3B1)).